Consider the following 579-residue polypeptide: Glutamate--tRNA ligase (579 aa).

The short motif at 114 to 124 is the 'HIGH' region element; sequence PNPNGPWHIGH.

It belongs to the class-I aminoacyl-tRNA synthetase family. Glutamate--tRNA ligase type 2 subfamily.

It is found in the cytoplasm. The catalysed reaction is tRNA(Glu) + L-glutamate + ATP = L-glutamyl-tRNA(Glu) + AMP + diphosphate. Functionally, catalyzes the attachment of glutamate to tRNA(Glu) in a two-step reaction: glutamate is first activated by ATP to form Glu-AMP and then transferred to the acceptor end of tRNA(Glu). This chain is Glutamate--tRNA ligase, found in Haloarcula marismortui (strain ATCC 43049 / DSM 3752 / JCM 8966 / VKM B-1809) (Halobacterium marismortui).